The sequence spans 293 residues: MPELPEVETVRLGLQPAMEGFRIDRAMANRCDLRFPFQPDFAARLTGQTITGLGRRAKYLLADLSSGDVLLMHLGMSGSFRVVNGAGDATPGEFHHPRSEDRTHDHVVFEMSSGARVIFNDPRRFGFMKIFARAAIDDEPHLKGLGPEPLGNAFDAAMLARACAGKQTSLKAALLDQRVVAGLGNIYVCEALWRAHLSPKRKASTLADRKGAPTDRAVRLVDAIRAVLGDAIKAGGSSLRDHRQTSGELGYFQHSFAVYDREGERCRTPGCNGTVKRLVQNGRSTFWCSGCQT.

The active-site Schiff-base intermediate with DNA is the P2. E3 acts as the Proton donor in catalysis. K58 (proton donor; for beta-elimination activity) is an active-site residue. Positions 104, 123, and 166 each coordinate DNA. Residues 257-293 (AVYDREGERCRTPGCNGTVKRLVQNGRSTFWCSGCQT) form an FPG-type zinc finger. The Proton donor; for delta-elimination activity role is filled by R283.

The protein belongs to the FPG family. As to quaternary structure, monomer. Requires Zn(2+) as cofactor.

It catalyses the reaction Hydrolysis of DNA containing ring-opened 7-methylguanine residues, releasing 2,6-diamino-4-hydroxy-5-(N-methyl)formamidopyrimidine.. The catalysed reaction is 2'-deoxyribonucleotide-(2'-deoxyribose 5'-phosphate)-2'-deoxyribonucleotide-DNA = a 3'-end 2'-deoxyribonucleotide-(2,3-dehydro-2,3-deoxyribose 5'-phosphate)-DNA + a 5'-end 5'-phospho-2'-deoxyribonucleoside-DNA + H(+). Functionally, involved in base excision repair of DNA damaged by oxidation or by mutagenic agents. Acts as a DNA glycosylase that recognizes and removes damaged bases. Has a preference for oxidized purines, such as 7,8-dihydro-8-oxoguanine (8-oxoG). Has AP (apurinic/apyrimidinic) lyase activity and introduces nicks in the DNA strand. Cleaves the DNA backbone by beta-delta elimination to generate a single-strand break at the site of the removed base with both 3'- and 5'-phosphates. The polypeptide is Formamidopyrimidine-DNA glycosylase (Rhodopseudomonas palustris (strain HaA2)).